A 487-amino-acid polypeptide reads, in one-letter code: Transcription factor GTE5, chloroplastic (487 aa).

Residues 1 to 32 (MSSEHISGGGASKTKKHKWSSSQNRPKPMGVS) constitute a chloroplast transit peptide. Disordered regions lie at residues 1-48 (MSSE…NSFA), 93-127 (ANPG…GADK), and 400-487 (KNEA…DNGN). The region spanning 127–233 (KGTVQIFKNC…NMFEDKWVSI (107 aa)) is the Bromo domain. The 82-residue stretch at 320-401 (EEEAPVNNRD…GYKESLSKKN (82 aa)) folds into the NET domain. The segment covering 400–414 (KNEAHGFGSERDAES) has biased composition (basic and acidic residues). The span at 415–435 (VHNSIQEPTTLVSGTTTSRVT) shows a compositional bias: polar residues. Residues 451–487 (NNASGSSSSNSSSSDSGSCSSDTDSDSSSGRGSDNGN) are compositionally biased toward low complexity.

As to quaternary structure, interacts with SIZ1 (via PHD domain). Post-translationally, sumoylated by SIZ1.

It is found in the plastid. The protein localises to the chloroplast. The polypeptide is Transcription factor GTE5, chloroplastic (GTE5) (Arabidopsis thaliana (Mouse-ear cress)).